The chain runs to 324 residues: Aspartate carbamoyltransferase catalytic subunit (324 aa).

Carbamoyl phosphate contacts are provided by arginine 55 and threonine 56. Position 83 (lysine 83) interacts with L-aspartate. Carbamoyl phosphate contacts are provided by arginine 105, histidine 135, and glutamine 138. Residues arginine 173 and arginine 227 each contribute to the L-aspartate site. Residues glycine 268 and proline 269 each coordinate carbamoyl phosphate.

It belongs to the aspartate/ornithine carbamoyltransferase superfamily. ATCase family. In terms of assembly, heterododecamer (2C3:3R2) of six catalytic PyrB chains organized as two trimers (C3), and six regulatory PyrI chains organized as three dimers (R2).

It carries out the reaction carbamoyl phosphate + L-aspartate = N-carbamoyl-L-aspartate + phosphate + H(+). It functions in the pathway pyrimidine metabolism; UMP biosynthesis via de novo pathway; (S)-dihydroorotate from bicarbonate: step 2/3. Catalyzes the condensation of carbamoyl phosphate and aspartate to form carbamoyl aspartate and inorganic phosphate, the committed step in the de novo pyrimidine nucleotide biosynthesis pathway. The polypeptide is Aspartate carbamoyltransferase catalytic subunit (Nocardioides sp. (strain ATCC BAA-499 / JS614)).